The chain runs to 101 residues: Large ribosomal subunit protein eL43 (101 aa).

Zn(2+) is bound by residues C40, C43, C59, and C62. A C4-type zinc finger spans residues 40 to 62; sequence CPSCRSLVRLERIAFGIWRCPKC.

It belongs to the eukaryotic ribosomal protein eL43 family. Putative zinc-binding subfamily. As to quaternary structure, part of the 50S ribosomal subunit. The cofactor is Zn(2+).

Binds to the 23S rRNA. This chain is Large ribosomal subunit protein eL43, found in Pyrobaculum aerophilum (strain ATCC 51768 / DSM 7523 / JCM 9630 / CIP 104966 / NBRC 100827 / IM2).